The sequence spans 152 residues: Ribosome maturation factor RimP (152 aa).

This sequence belongs to the RimP family.

Its subcellular location is the cytoplasm. Functionally, required for maturation of 30S ribosomal subunits. This is Ribosome maturation factor RimP from Burkholderia orbicola (strain MC0-3).